A 319-amino-acid polypeptide reads, in one-letter code: Acetyl-coenzyme A carboxylase carboxyl transferase subunit alpha (319 aa).

Residues N32–A293 enclose the CoA carboxyltransferase C-terminal domain.

It belongs to the AccA family. In terms of assembly, acetyl-CoA carboxylase is a heterohexamer composed of biotin carboxyl carrier protein (AccB), biotin carboxylase (AccC) and two subunits each of ACCase subunit alpha (AccA) and ACCase subunit beta (AccD).

The protein localises to the cytoplasm. The enzyme catalyses N(6)-carboxybiotinyl-L-lysyl-[protein] + acetyl-CoA = N(6)-biotinyl-L-lysyl-[protein] + malonyl-CoA. It participates in lipid metabolism; malonyl-CoA biosynthesis; malonyl-CoA from acetyl-CoA: step 1/1. Its function is as follows. Component of the acetyl coenzyme A carboxylase (ACC) complex. First, biotin carboxylase catalyzes the carboxylation of biotin on its carrier protein (BCCP) and then the CO(2) group is transferred by the carboxyltransferase to acetyl-CoA to form malonyl-CoA. This is Acetyl-coenzyme A carboxylase carboxyl transferase subunit alpha from Xanthomonas oryzae pv. oryzae (strain MAFF 311018).